The sequence spans 132 residues: Ragulator complex protein LAMTOR3 homolog (132 aa).

This sequence belongs to the LAMTOR3 family. Part of the Ragulator complex.

Functionally, regulator of the TOR pathway, a signaling cascade that promotes cell growth in response to growth factors, energy levels, and amino acids. May activate the TOR signaling cascade in response to amino acids. The chain is Ragulator complex protein LAMTOR3 homolog from Dictyostelium discoideum (Social amoeba).